Consider the following 461-residue polypeptide: Photosystem II CP43 reaction center protein (461 aa).

Residues 1–48 lie on the Cytoplasmic side of the membrane; it reads MVTLSSNSIFATNRDQESSGFAWWAGNARLINLSGKLLGAHVAHAGLI. Residues 49–71 traverse the membrane as a helical segment; sequence VFWAGAMTLFELAHFIPEKPMYE. At 72–111 the chain is on the lumenal side; the sequence is QGLILIPHIATLGWGVGPGGEVVDTFPFFVVGVVHLISSA. The chain crosses the membrane as a helical span at residues 112–133; sequence VLGFGGVYHAIRGPETLEEYSS. At 134–155 the chain is on the cytoplasmic side; sequence FFGYDWKDKNKMTTILGFHLIV. Residues 156-178 traverse the membrane as a helical segment; sequence LGIGALLLVAKAMFFGGLYDTWA. At 179-232 the chain is on the lumenal side; the sequence is PGGGDVRVITNPTLDPRVIFGYLLKSPFGGEGWIVSVNNLEDVVGGHIWIGLIC. A helical transmembrane segment spans residues 233–253; sequence IAGGIWHILTTPFGWARRAFI. The Cytoplasmic portion of the chain corresponds to 254-268; sequence WSGEAYLSYSLGALS. The helical transmembrane segment at 269 to 289 threads the bilayer; it reads MMGFIATCFVWFNNTVYPSEF. Residues 290–424 lie on the Lumenal side of the membrane; sequence YGPTGPEASQ…ATSHFVLAFF (135 aa). [CaMn4O5] cluster is bound at residue glutamate 355. Residues 425-449 form a helical membrane-spanning segment; that stretch reads FLVGHLWHAGRARAAAAGFEKGIDR. Residues 450-461 are Cytoplasmic-facing; sequence ESEPVLSMPSLD.

As to quaternary structure, PSII is composed of 1 copy each of membrane proteins PsbA, PsbB, PsbC, PsbD, PsbE, PsbF, PsbH, PsbI, PsbJ, PsbK, PsbL, PsbM, PsbT, PsbX, PsbY, PsbZ, Psb30/Ycf12, peripheral proteins PsbO, CyanoQ (PsbQ), PsbU, PsbV and a large number of cofactors. It forms dimeric complexes. Part of a photosystem II (PSII) assembly intermediate complex PSII-I; crystallized from a strain deleted of psbJ, it forms monomeric PSII before addition of the oxygen evolving complex. PSII-I includes 3 assembly factors not found in mature PSII (Psb27, Psb28 and Psb34), and CP43 (this protein) is not in its mature conformation. Binds multiple chlorophylls and provides some of the ligands for the Ca-4Mn-5O cluster of the oxygen-evolving complex. It may also provide a ligand for a Cl- that is required for oxygen evolution. PSII binds additional chlorophylls, carotenoids and specific lipids. is required as a cofactor.

Its subcellular location is the cellular thylakoid membrane. Its function is as follows. One of the components of the core complex of photosystem II (PSII). It binds chlorophyll and helps catalyze the primary light-induced photochemical processes of PSII. PSII is a light-driven water:plastoquinone oxidoreductase, using light energy to abstract electrons from H(2)O, generating O(2) and a proton gradient subsequently used for ATP formation. This chain is Photosystem II CP43 reaction center protein, found in Thermosynechococcus vestitus (strain NIES-2133 / IAM M-273 / BP-1).